The following is a 376-amino-acid chain: Erythronate-4-phosphate dehydrogenase (376 aa).

Residues serine 45 and threonine 67 each coordinate substrate. Aspartate 147 lines the NAD(+) pocket. Residue arginine 209 is part of the active site. Residue aspartate 233 participates in NAD(+) binding. Glutamate 238 is a catalytic residue. Histidine 255 functions as the Proton donor in the catalytic mechanism. Glycine 258 provides a ligand contact to NAD(+). Residue tyrosine 259 participates in substrate binding.

It belongs to the D-isomer specific 2-hydroxyacid dehydrogenase family. PdxB subfamily. As to quaternary structure, homodimer.

The protein localises to the cytoplasm. The catalysed reaction is 4-phospho-D-erythronate + NAD(+) = (R)-3-hydroxy-2-oxo-4-phosphooxybutanoate + NADH + H(+). It participates in cofactor biosynthesis; pyridoxine 5'-phosphate biosynthesis; pyridoxine 5'-phosphate from D-erythrose 4-phosphate: step 2/5. Functionally, catalyzes the oxidation of erythronate-4-phosphate to 3-hydroxy-2-oxo-4-phosphonooxybutanoate. This is Erythronate-4-phosphate dehydrogenase from Shewanella sp. (strain W3-18-1).